The following is a 258-amino-acid chain: Imidazole glycerol phosphate synthase subunit HisF (258 aa).

Catalysis depends on residues aspartate 11 and aspartate 130.

It belongs to the HisA/HisF family. In terms of assembly, heterodimer of HisH and HisF.

It localises to the cytoplasm. The catalysed reaction is 5-[(5-phospho-1-deoxy-D-ribulos-1-ylimino)methylamino]-1-(5-phospho-beta-D-ribosyl)imidazole-4-carboxamide + L-glutamine = D-erythro-1-(imidazol-4-yl)glycerol 3-phosphate + 5-amino-1-(5-phospho-beta-D-ribosyl)imidazole-4-carboxamide + L-glutamate + H(+). The protein operates within amino-acid biosynthesis; L-histidine biosynthesis; L-histidine from 5-phospho-alpha-D-ribose 1-diphosphate: step 5/9. Functionally, IGPS catalyzes the conversion of PRFAR and glutamine to IGP, AICAR and glutamate. The HisF subunit catalyzes the cyclization activity that produces IGP and AICAR from PRFAR using the ammonia provided by the HisH subunit. The sequence is that of Imidazole glycerol phosphate synthase subunit HisF from Gluconacetobacter diazotrophicus (strain ATCC 49037 / DSM 5601 / CCUG 37298 / CIP 103539 / LMG 7603 / PAl5).